The following is a 542-amino-acid chain: Chaperonin GroEL 2 (542 aa).

Residues 30-33 (TLGP), Lys51, 87-91 (DGTTT), Gly415, and Asp496 each bind ATP.

The protein belongs to the chaperonin (HSP60) family. Forms a cylinder of 14 subunits composed of two heptameric rings stacked back-to-back. Interacts with the co-chaperonin GroES.

It is found in the cytoplasm. It carries out the reaction ATP + H2O + a folded polypeptide = ADP + phosphate + an unfolded polypeptide.. Functionally, together with its co-chaperonin GroES, plays an essential role in assisting protein folding. The GroEL-GroES system forms a nano-cage that allows encapsulation of the non-native substrate proteins and provides a physical environment optimized to promote and accelerate protein folding. This Chelativorans sp. (strain BNC1) protein is Chaperonin GroEL 2.